A 96-amino-acid chain; its full sequence is Protein Vpr (96 aa).

A homooligomerization region spans residues M1–L42. 3 positions are modified to phosphoserine; by host: S79, S94, and S96.

Belongs to the HIV-1 VPR protein family. Homooligomer, may form homodimer. Interacts with p6-gag region of the Pr55 Gag precursor protein through a (Leu-X-X)4 motif near the C-terminus of the P6gag protein. Interacts with host UNG. May interact with host RAD23A/HHR23A. Interacts with host VPRBP/DCAF1, leading to hijack the CUL4A-RBX1-DDB1-DCAF1/VPRBP complex, mediating ubiquitination of host proteins such as TERT and ZGPAT and arrest of the cell cycle in G2 phase. In terms of processing, phosphorylated on several residues by host. These phosphorylations regulate VPR activity for the nuclear import of the HIV-1 pre-integration complex.

It is found in the virion. It localises to the host nucleus. Its subcellular location is the host extracellular space. During virus replication, may deplete host UNG protein, and incude G2-M cell cycle arrest. Acts by targeting specific host proteins for degradation by the 26S proteasome, through association with the cellular CUL4A-DDB1 E3 ligase complex by direct interaction with host VPRPB/DCAF-1. Cell cycle arrest reportedly occurs within hours of infection and is not blocked by antiviral agents, suggesting that it is initiated by the VPR carried into the virion. Additionally, VPR induces apoptosis in a cell cycle dependent manner suggesting that these two effects are mechanistically linked. Detected in the serum and cerebrospinal fluid of AIDS patient, VPR may also induce cell death to bystander cells. Its function is as follows. During virus entry, plays a role in the transport of the viral pre-integration (PIC) complex to the host nucleus. This function is crucial for viral infection of non-dividing macrophages. May act directly at the nuclear pore complex, by binding nucleoporins phenylalanine-glycine (FG)-repeat regions. The polypeptide is Protein Vpr (Human immunodeficiency virus type 1 group M subtype B (strain 89.6) (HIV-1)).